A 335-amino-acid polypeptide reads, in one-letter code: Ornithine carbamoyltransferase (335 aa).

Carbamoyl phosphate contacts are provided by residues S56 to T59, Q83, R107, and H134 to Q137. Residues N168, D232, and S236–M237 each bind L-ornithine. Residues C274–L275 and R320 contribute to the carbamoyl phosphate site.

It belongs to the aspartate/ornithine carbamoyltransferase superfamily. OTCase family.

It is found in the cytoplasm. The enzyme catalyses carbamoyl phosphate + L-ornithine = L-citrulline + phosphate + H(+). Its pathway is amino-acid biosynthesis; L-arginine biosynthesis; L-arginine from L-ornithine and carbamoyl phosphate: step 1/3. Reversibly catalyzes the transfer of the carbamoyl group from carbamoyl phosphate (CP) to the N(epsilon) atom of ornithine (ORN) to produce L-citrulline. This is Ornithine carbamoyltransferase from Pectobacterium atrosepticum (strain SCRI 1043 / ATCC BAA-672) (Erwinia carotovora subsp. atroseptica).